Consider the following 406-residue polypeptide: MTMNLINKKNLNIYLCGPTVYSDVHIGNLRTIIIFDAIFECLKNKGFSINFLHNITDIDDKIIEKAQELGISEAELTEKYTNEYFKILEIFNIKKPTKIVKVTEKIEKIIEYIKLLEKKGFTYYNKNNDLVFDILKIPNYGIISGQKIESLLDKNTKKTKSKNDFVLWKKTQKGLFFKSLFGLGRPGWHTECAALIYDYFQKKSLDLHGGGVDLIFPHHENENAQHFALTGNPIAENWFRSGFVNLNGKKMAKSLNNVLLAKNFSHKYNPDIIRSIFLSINPTVPINLTEELIKNHKKLIEKYQKICFEWYFDKKNEKTEKVEQVLNLFIEGKFAKANFLIMELIKQKENSTIRKIFLNLRFNFTKMRLDPESQEKIKNWNKLIMDKNYSEADKIREELWKIFKNS.

Cysteine 16 contacts Zn(2+). The short motif at 18–28 (PTVYSDVHIGN) is the 'HIGH' region element. Cysteine 192, histidine 218, and glutamate 222 together coordinate Zn(2+). The 'KMSKS' region motif lies at 250–254 (KMAKS). Residue lysine 253 participates in ATP binding.

It belongs to the class-I aminoacyl-tRNA synthetase family. In terms of assembly, monomer. It depends on Zn(2+) as a cofactor.

The protein localises to the cytoplasm. The enzyme catalyses tRNA(Cys) + L-cysteine + ATP = L-cysteinyl-tRNA(Cys) + AMP + diphosphate. The polypeptide is Cysteine--tRNA ligase (Mesomycoplasma hyopneumoniae (strain J / ATCC 25934 / NCTC 10110) (Mycoplasma hyopneumoniae)).